A 425-amino-acid chain; its full sequence is Threonylcarbamoyladenosine tRNA methylthiotransferase (425 aa).

Residues 60-295 (RKNELIEVLS…RSYTRYTDER (236 aa)) form the Radical SAM core domain. The [4Fe-4S] cluster site is built by Cys-74, Cys-78, and Cys-81. Residues 293 to 355 (DERIGELHRV…KFSMISKPAS (63 aa)) form the TRAM domain. Residues 362 to 382 (PLSLMHLFPLAVFCLVLITLY) form a helical membrane-spanning segment.

This sequence belongs to the methylthiotransferase family. CDKAL1 subfamily. [4Fe-4S] cluster is required as a cofactor.

Its subcellular location is the membrane. It carries out the reaction N(6)-L-threonylcarbamoyladenosine(37) in tRNA + (sulfur carrier)-SH + AH2 + 2 S-adenosyl-L-methionine = 2-methylsulfanyl-N(6)-L-threonylcarbamoyladenosine(37) in tRNA + (sulfur carrier)-H + 5'-deoxyadenosine + L-methionine + A + S-adenosyl-L-homocysteine + 2 H(+). Catalyzes the methylthiolation of N6-threonylcarbamoyladenosine (t(6)A), leading to the formation of 2-methylthio-N6-threonylcarbamoyladenosine (ms(2)t(6)A) at position 37 in tRNAs that read codons beginning with adenine. This Caenorhabditis elegans protein is Threonylcarbamoyladenosine tRNA methylthiotransferase.